A 391-amino-acid chain; its full sequence is Ferrochelatase (391 aa).

Fe cation-binding residues include His-196 and Glu-281.

Belongs to the ferrochelatase family.

Its subcellular location is the cytoplasm. It catalyses the reaction heme b + 2 H(+) = protoporphyrin IX + Fe(2+). It participates in porphyrin-containing compound metabolism; protoheme biosynthesis; protoheme from protoporphyrin-IX: step 1/1. Catalyzes the ferrous insertion into protoporphyrin IX. In Parasynechococcus marenigrum (strain WH8102), this protein is Ferrochelatase.